The chain runs to 647 residues: Frizzled-1 (647 aa).

A signal peptide spans 1–69 (MAEEEAPKKS…WLLEAPLLLG (69 aa)). The Extracellular segment spans residues 73-322 (QAAGQGPGQG…PEELRFSRTW (250 aa)). The disordered stretch occupies residues 74–104 (AAGQGPGQGPGPGQQPPPPPQQQQSGQQYNG). The 120-residue stretch at 111-230 (PDHGYCQPIS…HGAGELCVGQ (120 aa)) folds into the FZ domain. 5 cysteine pairs are disulfide-bonded: Cys116–Cys177, Cys124–Cys170, Cys161–Cys198, Cys187–Cys227, and Cys191–Cys215. A glycan (N-linked (GlcNAc...) asparagine) is linked at Asn130. A glycan (N-linked (GlcNAc...) asparagine) is linked at Asn231. Residues 323–343 (IGIWSVLCCASTLFTVLTYLV) traverse the membrane as a helical segment. Over 344–354 (DMRRFSYPERP) the chain is Cytoplasmic. The chain crosses the membrane as a helical span at residues 355-375 (IIFLSGCYTAVAVAYIAGFLL). The Extracellular portion of the chain corresponds to 376–402 (EDRVVCNDKFAEDGARTVAQGTKKEGC). A helical membrane pass occupies residues 403 to 423 (TILFMMLYFFSMASSIWWVIL). Residues 424 to 445 (SLTWFLAAGMKWGHEAIEANSQ) lie on the Cytoplasmic side of the membrane. The chain crosses the membrane as a helical span at residues 446–466 (YFHLAAWAVPAIKTITILALG). Over 467 to 489 (QVDGDVLSGVCFVGLNNVDALRG) the chain is Extracellular. The chain crosses the membrane as a helical span at residues 490-510 (FVLAPLFVYLFIGTSFLLAGF). At 511–536 (VSLFRIRTIMKHDGTKTEKLEKLMVR) the chain is on the cytoplasmic side. Residues 537 to 557 (IGVFSVLYTVPATIVIACYFY) form a helical membrane-spanning segment. Residues 558–601 (EQAFRDQWERSWVAQSCKSYAIPCPHLQAGGGAPPHPPMSPDFT) lie on the Extracellular side of the membrane. The helical transmembrane segment at 602–622 (VFMIKYLMTLIVGITSGFWIW) threads the bilayer. Residues 623–647 (SGKTLNSWRKFYTRLTNSKQGETTV) are Cytoplasmic-facing. Residues 625–630 (KTLNSW) carry the Lys-Thr-X-X-X-Trp motif, mediates interaction with the PDZ domain of Dvl family members motif. The PDZ-binding signature appears at 645-647 (TTV).

This sequence belongs to the G-protein coupled receptor Fz/Smo family. Interacts with MYOC. Interacts with WNT7B. As to quaternary structure, (Microbial infection) Interacts with C.difficile toxin TcdB; frizzled receptors constitute the major host receptors for TcdB in the colonic epithelium. Post-translationally, ubiquitinated by ZNRF3, leading to its degradation by the proteasome. In terms of tissue distribution, expressed in adult heart, placenta, lung, kidney, pancreas, prostate, and ovary and in fetal lung and kidney.

Its subcellular location is the cell membrane. Its function is as follows. Receptor for Wnt proteins. Activated by WNT3A, WNT3, WNT1 and to a lesser extent WNT2, but apparently not by WNT4, WNT5A, WNT5B, WNT6, WNT7A or WNT7B. Contradictory results showing activation by WNT7B have been described for mouse. Functions in the canonical Wnt/beta-catenin signaling pathway. The canonical Wnt/beta-catenin signaling pathway leads to the activation of disheveled proteins, inhibition of GSK-3 kinase, nuclear accumulation of beta-catenin and activation of Wnt target genes. A second signaling pathway involving PKC and calcium fluxes has been seen for some family members, but it is not yet clear if it represents a distinct pathway or if it can be integrated in the canonical pathway, as PKC seems to be required for Wnt-mediated inactivation of GSK-3 kinase. Both pathways seem to involve interactions with G-proteins. May be involved in transduction and intercellular transmission of polarity information during tissue morphogenesis and/or in differentiated tissues. (Microbial infection) Acts as a receptor for C.difficile toxin TcdB in the colonic epithelium. The sequence is that of Frizzled-1 (FZD1) from Homo sapiens (Human).